The sequence spans 210 residues: Eukaryotic translation initiation factor 2 subunit gamma (210 aa).

The tr-type G domain maps to Ile-1–Arg-196. The tract at residues Gly-2–Ser-9 is G1. Ala-5–Thr-10 provides a ligand contact to GTP. Residues Asn-30–Lys-34 are G2. A G3 region spans residues Asp-85 to Gly-88. GTP contacts are provided by residues Asn-141 to Asp-144 and Ser-174 to Ile-176. Positions Asn-141 to Asp-144 are G4. Residues Ser-174–Ile-176 form a G5 region.

The protein belongs to the TRAFAC class translation factor GTPase superfamily. Classic translation factor GTPase family. EIF2G subfamily. In terms of assembly, eukaryotic translation initiation factor 2 eIF2 is a heterotrimeric complex composed of an alpha, a beta and a gamma subunit. The factors eIF-1, eIF-2, eIF-3, TIF5/eIF-5 and methionyl-tRNAi form a multifactor complex (MFC) that may bind to the 40S ribosome.

It localises to the cytoplasm. The protein localises to the cytosol. It carries out the reaction GTP + H2O = GDP + phosphate + H(+). As a subunit of eukaryotic initiation factor 2 eIF2, involved in the early steps of protein synthesis. In the presence of GTP, eIF-2 forms a ternary complex with initiator tRNA Met-tRNAi and then recruits the 40S ribosomal complex and initiation factors eIF-1, eIF-1A and eIF-3 to form the 43S pre-initiation complex (43S PIC), a step that determines the rate of protein translation. The 43S PIC binds to mRNA and scans downstream to the initiation codon, where it forms a 48S initiation complex by codon-anticodon base pairing. This leads to the displacement of eIF-1 to allow GTPase-activating protein (GAP) eIF-5-mediated hydrolysis of eIF2-bound GTP. Hydrolysis of GTP and release of Pi, which makes GTP hydrolysis irreversible, causes the release of the eIF-2-GDP binary complex from the 40S subunit, an event that is essential for the subsequent joining of the 60S ribosomal subunit to form an elongation-competent 80S ribosome. In order for eIF-2 to recycle and catalyze another round of initiation, the GDP bound to eIF-2 must be exchanged with GTP by way of a reaction catalyzed by GDP-GTP exchange factor (GEF) eIF-2B. The protein is Eukaryotic translation initiation factor 2 subunit gamma of Spironucleus vortens.